A 101-amino-acid chain; its full sequence is MDPVDPNIEPWNQPGSQPKTACNQCYCKRCCYHCQICFLKKGLGISNGRKKRRPRRTTPYNSENHQDPLRKQPLSQPRGEQTDPKESKKKVESKTKTDQFD.

A disordered region spans residues 1-20 (MDPVDPNIEPWNQPGSQPKT). Positions 1–24 (MDPVDPNIEPWNQPGSQPKTACNQ) are interaction with human CREBBP. Residues 1–48 (MDPVDPNIEPWNQPGSQPKTACNQCYCKRCCYHCQICFLKKGLGISNG) form a transactivation region. Zn(2+)-binding residues include Cys-22, Cys-25, and Cys-27. Residues 22-37 (CNQCYCKRCCYHCQIC) are cysteine-rich. Position 28 is an N6-acetyllysine; by host PCAF (Lys-28). 4 residues coordinate Zn(2+): Cys-30, His-33, Cys-34, and Cys-37. Residues 38-48 (FLKKGLGISNG) form a core region. A disordered region spans residues 45–101 (ISNGRKKRRPRRTTPYNSENHQDPLRKQPLSQPRGEQTDPKESKKKVESKTKTDQFD). The short motif at 49 to 57 (RKKRRPRRT) is the Nuclear localization signal, RNA-binding (TAR), and protein transduction element. An interaction with the host capping enzyme RNGTT region spans residues 49-86 (RKKRRPRRTTPYNSENHQDPLRKQPLSQPRGEQTDPKE). 2 positions are modified to N6-acetyllysine; by host EP300 and GCN5L2: Lys-50 and Lys-51. Arg-52 and Arg-53 each carry asymmetric dimethylarginine; by host PRMT6. Residue Lys-71 forms a Glycyl lysine isopeptide (Lys-Gly) (interchain with G-Cter in ubiquitin) linkage. Over residues 80–101 (EQTDPKESKKKVESKTKTDQFD) the composition is skewed to basic and acidic residues.

Belongs to the lentiviruses Tat family. Interacts with host CCNT1. Associates with the P-TEFb complex composed at least of Tat, P-TEFb (CDK9 and CCNT1), TAR RNA, RNA Pol II. Recruits the HATs CREBBP, TAF1/TFIID, EP300, PCAF and GCN5L2. Interacts with host KAT5/Tip60; this interaction targets the latter to degradation. Interacts with the host deacetylase SIRT1. Interacts with host capping enzyme RNGTT; this interaction stimulates RNGTT. Binds to host KDR, and to the host integrins ITGAV/ITGB3 and ITGA5/ITGB1. Interacts with host KPNB1/importin beta-1 without previous binding to KPNA1/importin alpha-1. Interacts with EIF2AK2. Interacts with host nucleosome assembly protein NAP1L1; this interaction may be required for the transport of Tat within the nucleus, since the two proteins interact at the nuclear rim. Interacts with host C1QBP/SF2P32; this interaction involves lysine-acetylated Tat. Interacts with the host chemokine receptors CCR2, CCR3 and CXCR4. Interacts with host DPP4/CD26; this interaction may trigger an anti-proliferative effect. Interacts with host LDLR. Interacts with the host extracellular matrix metalloproteinase MMP1. Interacts with host PRMT6; this interaction mediates Tat's methylation. Interacts with, and is ubiquitinated by MDM2/Hdm2. Interacts with host PSMC3 and HTATIP2. Interacts with STAB1; this interaction may overcome SATB1-mediated repression of IL2 and IL2RA (interleukin) in T cells by binding to the same domain than HDAC1. Interacts (when acetylated) with human CDK13, thereby increasing HIV-1 mRNA splicing and promoting the production of the doubly spliced HIV-1 protein Nef. Interacts with host TBP; this interaction modulates the activity of transcriptional pre-initiation complex. Interacts with host RELA. Interacts with host PLSCR1; this interaction negatively regulates Tat transactivation activity by altering its subcellular distribution. Asymmetrical arginine methylation by host PRMT6 seems to diminish the transactivation capacity of Tat and affects the interaction with host CCNT1. In terms of processing, acetylation by EP300, CREBBP, GCN5L2/GCN5 and PCAF regulates the transactivation activity of Tat. EP300-mediated acetylation of Lys-50 promotes dissociation of Tat from the TAR RNA through the competitive binding to PCAF's bromodomain. In addition, the non-acetylated Tat's N-terminus can also interact with PCAF. PCAF-mediated acetylation of Lys-28 enhances Tat's binding to CCNT1. Lys-50 is deacetylated by SIRT1. Post-translationally, polyubiquitination by host MDM2 does not target Tat to degradation, but activates its transactivation function and fosters interaction with CCNT1 and TAR RNA. Phosphorylated by EIF2AK2 on serine and threonine residues adjacent to the basic region important for TAR RNA binding and function. Phosphorylation of Tat by EIF2AK2 is dependent on the prior activation of EIF2AK2 by dsRNA.

Its subcellular location is the host nucleus. The protein resides in the host nucleolus. The protein localises to the host cytoplasm. It is found in the secreted. In terms of biological role, transcriptional activator that increases RNA Pol II processivity, thereby increasing the level of full-length viral transcripts. Recognizes a hairpin structure at the 5'-LTR of the nascent viral mRNAs referred to as the transactivation responsive RNA element (TAR) and recruits the cyclin T1-CDK9 complex (P-TEFb complex) that will in turn hyperphosphorylate the RNA polymerase II to allow efficient elongation. The CDK9 component of P-TEFb and other Tat-activated kinases hyperphosphorylate the C-terminus of RNA Pol II that becomes stabilized and much more processive. Other factors such as HTATSF1/Tat-SF1, SUPT5H/SPT5, and HTATIP2 are also important for Tat's function. Besides its effect on RNA Pol II processivity, Tat induces chromatin remodeling of proviral genes by recruiting the histone acetyltransferases (HATs) CREBBP, EP300 and PCAF to the chromatin. This also contributes to the increase in proviral transcription rate, especially when the provirus integrates in transcriptionally silent region of the host genome. To ensure maximal activation of the LTR, Tat mediates nuclear translocation of NF-kappa-B by interacting with host RELA. Through its interaction with host TBP, Tat may also modulate transcription initiation. Tat can reactivate a latently infected cell by penetrating in it and transactivating its LTR promoter. In the cytoplasm, Tat is thought to act as a translational activator of HIV-1 mRNAs. Its function is as follows. Extracellular circulating Tat can be endocytosed by surrounding uninfected cells via the binding to several surface receptors such as CD26, CXCR4, heparan sulfate proteoglycans (HSPG) or LDLR. Neurons are rarely infected, but they internalize Tat via their LDLR. Through its interaction with nuclear HATs, Tat is potentially able to control the acetylation-dependent cellular gene expression. Modulates the expression of many cellular genes involved in cell survival, proliferation or in coding for cytokines or cytokine receptors. Tat plays a role in T-cell and neurons apoptosis. Tat induced neurotoxicity and apoptosis probably contribute to neuroAIDS. Circulating Tat also acts as a chemokine-like and/or growth factor-like molecule that binds to specific receptors on the surface of the cells, affecting many cellular pathways. In the vascular system, Tat binds to ITGAV/ITGB3 and ITGA5/ITGB1 integrins dimers at the surface of endothelial cells and competes with bFGF for heparin-binding sites, leading to an excess of soluble bFGF. This is Protein Tat from Homo sapiens (Human).